A 338-amino-acid polypeptide reads, in one-letter code: Methionyl-tRNA formyltransferase (338 aa).

Residue 110–113 coordinates (6S)-5,6,7,8-tetrahydrofolate; sequence SLLP.

Belongs to the Fmt family.

The enzyme catalyses L-methionyl-tRNA(fMet) + (6R)-10-formyltetrahydrofolate = N-formyl-L-methionyl-tRNA(fMet) + (6S)-5,6,7,8-tetrahydrofolate + H(+). Attaches a formyl group to the free amino group of methionyl-tRNA(fMet). The formyl group appears to play a dual role in the initiator identity of N-formylmethionyl-tRNA by promoting its recognition by IF2 and preventing the misappropriation of this tRNA by the elongation apparatus. This Synechococcus sp. (strain CC9605) protein is Methionyl-tRNA formyltransferase.